The primary structure comprises 304 residues: uncharacterized protein (304 aa).

A disordered region spans residues M1–S183. Residues P132–S166 show a composition bias toward low complexity. 2 helical membrane passes run L206–V226 and F265–V285.

This sequence to M.leprae ML0007.

Its subcellular location is the cell membrane. This is an uncharacterized protein from Mycobacterium tuberculosis (strain ATCC 25618 / H37Rv).